A 65-amino-acid polypeptide reads, in one-letter code: MPKMKTHRGAAKRFKKTASGKFKAKNAFTRHILEKKSAKRKRQLRGTAVVAKEDTPKLKELLPYL.

It belongs to the bacterial ribosomal protein bL35 family.

The polypeptide is Large ribosomal subunit protein bL35 (Heliobacterium modesticaldum (strain ATCC 51547 / Ice1)).